Consider the following 400-residue polypeptide: Imidazolonepropionase (400 aa).

Fe(3+)-binding residues include H70 and H72. 2 residues coordinate Zn(2+): H70 and H72. Positions 79, 142, and 175 each coordinate 4-imidazolone-5-propanoate. N-formimidoyl-L-glutamate is bound at residue Y142. H239 contacts Fe(3+). H239 provides a ligand contact to Zn(2+). Q242 provides a ligand contact to 4-imidazolone-5-propanoate. Residue D314 coordinates Fe(3+). D314 serves as a coordination point for Zn(2+). N-formimidoyl-L-glutamate contacts are provided by N316 and G318. T319 contributes to the 4-imidazolone-5-propanoate binding site.

The protein belongs to the metallo-dependent hydrolases superfamily. HutI family. The cofactor is Zn(2+). Fe(3+) is required as a cofactor.

Its subcellular location is the cytoplasm. The catalysed reaction is 4-imidazolone-5-propanoate + H2O = N-formimidoyl-L-glutamate. It participates in amino-acid degradation; L-histidine degradation into L-glutamate; N-formimidoyl-L-glutamate from L-histidine: step 3/3. Functionally, catalyzes the hydrolytic cleavage of the carbon-nitrogen bond in imidazolone-5-propanoate to yield N-formimidoyl-L-glutamate. It is the third step in the universal histidine degradation pathway. The chain is Imidazolonepropionase from Methylobacterium sp. (strain 4-46).